A 414-amino-acid polypeptide reads, in one-letter code: Imidazolonepropionase (414 aa).

Positions 95 and 97 each coordinate Fe(3+). Zn(2+) contacts are provided by histidine 95 and histidine 97. The 4-imidazolone-5-propanoate site is built by arginine 104, tyrosine 162, and histidine 189. N-formimidoyl-L-glutamate is bound at residue tyrosine 162. Histidine 252 provides a ligand contact to Fe(3+). Position 252 (histidine 252) interacts with Zn(2+). Glutamine 255 is a binding site for 4-imidazolone-5-propanoate. Aspartate 326 provides a ligand contact to Fe(3+). Zn(2+) is bound at residue aspartate 326. Asparagine 328 and glycine 330 together coordinate N-formimidoyl-L-glutamate. Serine 331 contributes to the 4-imidazolone-5-propanoate binding site.

This sequence belongs to the metallo-dependent hydrolases superfamily. HutI family. Zn(2+) serves as cofactor. Fe(3+) is required as a cofactor.

Its subcellular location is the cytoplasm. The enzyme catalyses 4-imidazolone-5-propanoate + H2O = N-formimidoyl-L-glutamate. It participates in amino-acid degradation; L-histidine degradation into L-glutamate; N-formimidoyl-L-glutamate from L-histidine: step 3/3. Catalyzes the hydrolytic cleavage of the carbon-nitrogen bond in imidazolone-5-propanoate to yield N-formimidoyl-L-glutamate. It is the third step in the universal histidine degradation pathway. This Streptomyces avermitilis (strain ATCC 31267 / DSM 46492 / JCM 5070 / NBRC 14893 / NCIMB 12804 / NRRL 8165 / MA-4680) protein is Imidazolonepropionase.